Consider the following 405-residue polypeptide: Argininosuccinate synthase (405 aa).

Residue 12 to 20 (AYSGGLDTS) participates in ATP binding. Residues Tyr92 and Ser97 each coordinate L-citrulline. ATP is bound at residue Gly122. 3 residues coordinate L-aspartate: Thr124, Asn128, and Asp129. Asn128 is a binding site for L-citrulline. L-citrulline is bound by residues Arg132, Ser181, Ser190, Glu266, and Tyr278.

Belongs to the argininosuccinate synthase family. Type 1 subfamily. As to quaternary structure, homotetramer.

It is found in the cytoplasm. It carries out the reaction L-citrulline + L-aspartate + ATP = 2-(N(omega)-L-arginino)succinate + AMP + diphosphate + H(+). It participates in amino-acid biosynthesis; L-arginine biosynthesis; L-arginine from L-ornithine and carbamoyl phosphate: step 2/3. This is Argininosuccinate synthase from Cronobacter sakazakii (strain ATCC BAA-894) (Enterobacter sakazakii).